Reading from the N-terminus, the 206-residue chain is High frequency lysogenization protein HflD homolog (206 aa).

Belongs to the HflD family.

The protein localises to the cytoplasm. Its subcellular location is the cell inner membrane. The protein is High frequency lysogenization protein HflD homolog of Pseudomonas savastanoi pv. phaseolicola (strain 1448A / Race 6) (Pseudomonas syringae pv. phaseolicola (strain 1448A / Race 6)).